A 244-amino-acid chain; its full sequence is 7-cyano-7-deazaguanine synthase (244 aa).

Residue 19-29 (FSGGQDSTTCL) coordinates ATP. Positions 207, 222, 225, and 228 each coordinate Zn(2+).

It belongs to the QueC family. It depends on Zn(2+) as a cofactor.

It catalyses the reaction 7-carboxy-7-deazaguanine + NH4(+) + ATP = 7-cyano-7-deazaguanine + ADP + phosphate + H2O + H(+). It participates in purine metabolism; 7-cyano-7-deazaguanine biosynthesis. In terms of biological role, catalyzes the ATP-dependent conversion of 7-carboxy-7-deazaguanine (CDG) to 7-cyano-7-deazaguanine (preQ(0)). In Bordetella avium (strain 197N), this protein is 7-cyano-7-deazaguanine synthase.